The sequence spans 499 residues: Cytochrome P450 710A2 (499 aa).

The chain crosses the membrane as a helical span at residues 5 to 25; sequence VSIFASLAPYLVSALLLFFLI. Cysteine 439 contributes to the heme binding site.

Belongs to the cytochrome P450 family. The cofactor is heme. Expressed in the vascular tissues of roots, shoots, stems and leaves. Expressed in root tips, carpes, siliques and seeds.

The protein localises to the membrane. The catalysed reaction is 5-dehydroepisterol + NADPH + O2 + H(+) = ergosta-5,7,22,24(28)-tetraen-3beta-ol + NADP(+) + 2 H2O. It functions in the pathway steroid biosynthesis; sterol biosynthesis. Required to form the C-22 double bond in the sterol side chain. Possesses in vitro C-22 desaturase activity toward 24-epi-campesterol and beta-sitosterol and produces brassicasterol and stigmasterol, respectively. No activity with campesterol. In Arabidopsis thaliana (Mouse-ear cress), this protein is Cytochrome P450 710A2.